Consider the following 53-residue polypeptide: Tryptophan RNA-binding attenuator protein inhibitory protein (53 aa).

2 CXXCXGXG motif repeats span residues 12–19 (CPKCERAG) and 26–33 (CPACSGKG).

Homopentamer or homohexamer.

Its subcellular location is the cytoplasm. Functionally, by forming a complex with tryptophan-activated TRAP, and masking its RNA binding site, it inhibits TRAP's RNA binding ability, thereby abolishing TRAP regulation of gene expression, leading to antitermination and increased trp operon expression. AT acts by competing with messenger RNA for the RNA binding domain of TRAP. This Bacillus subtilis (strain 168) protein is Tryptophan RNA-binding attenuator protein inhibitory protein (rtpA).